We begin with the raw amino-acid sequence, 470 residues long: O-acyltransferase pboC (470 aa).

Active-site proton acceptor residues include His-149 and Asp-386.

Belongs to the plant acyltransferase family. Monomer.

It participates in secondary metabolite biosynthesis. Its function is as follows. O-acetyltransferase; part of the gene cluster that mediates the biosynthesis of protubonine B, a hydroxylated and diacetylated cyclo-L-Trp-L-Leu derivative. Within the pathway, pboC catalyzes the acetylation of protubonine D at the hydroxy group to produce protubonine C. The first step of the protubonine B synthesis is performed by the nonribosomal peptide synthetase pboA that catalyzes the formation of cyclo-L-Trp-L-Leu by condensing L-Leu with L-Trp. The flavin-dependent monooxygenase pboD is responsible for hydroxylation at C-3 of the indole ring and subsequent formation of the pyrrolidine ring, leadind to protubonine D. Protubonine D is further diacetylated by two acetyltransferases, pboB and pboC, to form the final product protubonine B via protubonine C. In Aspergillus ustus, this protein is O-acyltransferase pboC.